Here is a 142-residue protein sequence, read N- to C-terminus: Baculoviral IAP repeat-containing protein 5 (142 aa).

A BIR repeat occupies 18 to 88 (RVSTFKNWPF…KHSSGCAFLS (71 aa)). At Ser-20 the chain carries Phosphoserine; by AURKC. The residue at position 23 (Lys-23) is an N6-acetyllysine. Phosphothreonine; by CDK1 and CDK15 is present on Thr-34. Thr-48 bears the Phosphothreonine mark. 4 residues coordinate Zn(2+): Cys-57, Cys-60, His-77, and Cys-84. Residues Lys-90, Lys-110, Lys-112, and Lys-115 each carry the N6-acetyllysine modification. Residue Thr-117 is modified to Phosphothreonine; by AURKB. Residue Lys-129 is modified to N6-acetyllysine.

The protein belongs to the IAP family. In terms of assembly, monomer or homodimer. Exists as a homodimer in the apo state and as a monomer in the CPC-bound state. The monomer protects cells against apoptosis more efficiently than the dimer. Only the dimeric form is capable of enhancing tubulin stability in cells. When phosphorylated, interacts with LAMTOR5/HBXIP; the resulting complex binds pro-CASP9, as well as active CASP9, but much less efficiently. Component of the chromosomal passenger complex (CPC) composed of at least BIRC5/survivin, CDCA8/borealin, INCENP, AURKB or AURKC; in the complex forms a triple-helix bundle-based subcomplex with INCENP and CDCA8. Interacts with JTB. Interacts (via BIR domain) with histone H3 phosphorylated at 'Thr-3' (H3pT3). Interacts with EVI5. Interacts with GTP-bound RAN in both the S and M phases of the cell cycle. Interacts with USP9X. Interacts with tubulin. Interacts with BIRC2/c-IAP1. The acetylated form at Lys-129 interacts with STAT3. The monomeric form deacetylated at Lys-129 interacts with XPO1/CRM1. The monomeric form interacts with XIAP/BIRC4. Both the dimeric and monomeric form can interact with DIABLO/SMAC. Interacts with BIRC6/bruce. Interacts with FBXL7; this interaction facilitates the polyubiquitination and subsequent proteasomal degradation of BIRC5 by the SCF(FBXL7) E3 ubiquitin-protein ligase complex. In terms of processing, ubiquitinated by the Cul9-RING ubiquitin-protein ligase complex, leading to its degradation. Ubiquitination is required for centrosomal targeting. Deubiquitinated by USP35 or USP38; leading to stabilization. Acetylation at Lys-129 results in its homodimerization, while deacetylation promotes the formation of monomers which heterodimerize with XPO1/CRM1 which facilitates its nuclear export. The acetylated form represses STAT3 transactivation. The dynamic equilibrium between its acetylation and deacetylation at Lys-129 determines its interaction with XPO1/CRM1, its subsequent subcellular localization, and its ability to inhibit STAT3 transactivation. Post-translationally, in vitro phosphorylation at Thr-117 by AURKB prevents interaction with INCENP and localization to mitotic chromosomes. Phosphorylation at Thr-48 by CK2 is critical for its mitotic and anti-apoptotic activities. Phosphorylation at Thr-34 by CDK15 is critical for its anti-apoptotic activity. Phosphorylation at Ser-20 by AURKC is critical for regulation of proper chromosome alignment and segregation, and possibly cytokinesis.

It localises to the cytoplasm. It is found in the nucleus. The protein localises to the chromosome. The protein resides in the centromere. Its subcellular location is the cytoskeleton. It localises to the spindle. It is found in the kinetochore. The protein localises to the midbody. In terms of biological role, multitasking protein that has dual roles in promoting cell proliferation and preventing apoptosis. Component of a chromosome passage protein complex (CPC) which is essential for chromosome alignment and segregation during mitosis and cytokinesis. Acts as an important regulator of the localization of this complex; directs CPC movement to different locations from the inner centromere during prometaphase to midbody during cytokinesis and participates in the organization of the center spindle by associating with polymerized microtubules. Involved in the recruitment of CPC to centromeres during early mitosis via association with histone H3 phosphorylated at 'Thr-3' (H3pT3) during mitosis. The complex with RAN plays a role in mitotic spindle formation by serving as a physical scaffold to help deliver the RAN effector molecule TPX2 to microtubules. May counteract a default induction of apoptosis in G2/M phase. The acetylated form represses STAT3 transactivation of target gene promoters. May play a role in neoplasia. Inhibitor of CASP3 and CASP7. Essential for the maintenance of mitochondrial integrity and function. The chain is Baculoviral IAP repeat-containing protein 5 (BIRC5) from Bos taurus (Bovine).